The sequence spans 199 residues: Peroxiredoxin-1 (199 aa).

Position 2 is an N-acetylserine (Ser-2). In terms of domain architecture, Thioredoxin spans 6 to 165 (AKIGHRAPQF…TLRLVQAFQF (160 aa)). N6-acetyllysine; alternate is present on Lys-7. Lys-7 participates in a covalent cross-link: Glycyl lysine isopeptide (Lys-Gly) (interchain with G-Cter in SUMO2); alternate. Residues Lys-16 and Lys-27 each carry the N6-acetyllysine modification. Residue Lys-35 is modified to N6-acetyllysine; alternate. Lys-35 bears the N6-succinyllysine; alternate mark. The active-site Cysteine sulfenic acid (-SOH) intermediate is the Cys-52. Thr-90 bears the Phosphothreonine mark. A Glycyl lysine isopeptide (Lys-Gly) (interchain with G-Cter in SUMO2) cross-link involves residue Lys-120. Lys-136 is subject to N6-acetyllysine. Residues 176 to 199 (GWKPGSDTIKPDVQKSKEYFSKQK) form a disordered region. Residues 184–199 (IKPDVQKSKEYFSKQK) show a composition bias toward basic and acidic residues. Residue Lys-185 forms a Glycyl lysine isopeptide (Lys-Gly) (interchain with G-Cter in SUMO1) linkage. Residue Lys-197 is modified to N6-acetyllysine.

Belongs to the peroxiredoxin family. AhpC/Prx1 subfamily. Homodimer; disulfide-linked, upon oxidation. 5 homodimers assemble to form a ring-like decamer. Interacts with GDPD5; forms a mixed-disulfide with GDPD5. Interacts with SESN1 and SESN2. Interacts with FAM107A. In terms of processing, phosphorylated on Thr-90 during the M-phase, which leads to a decrease in enzymatic activity. Post-translationally, acetylation increases reducing activity and resistance to superoxidation. Deacetylated by HDAC6 which decreases reducing activity.

It is found in the cytoplasm. The enzyme catalyses a hydroperoxide + [thioredoxin]-dithiol = an alcohol + [thioredoxin]-disulfide + H2O. Thiol-specific peroxidase that catalyzes the reduction of hydrogen peroxide and organic hydroperoxides to water and alcohols, respectively. Plays a role in cell protection against oxidative stress by detoxifying peroxides and as sensor of hydrogen peroxide-mediated signaling events. Might participate in the signaling cascades of growth factors and tumor necrosis factor-alpha by regulating the intracellular concentrations of H(2)O(2). Reduces an intramolecular disulfide bond in GDPD5 that gates the ability to GDPD5 to drive postmitotic motor neuron differentiation. The chain is Peroxiredoxin-1 (PRDX1) from Bos taurus (Bovine).